A 401-amino-acid chain; its full sequence is Elongation factor Tu (401 aa).

Residues 10 to 211 (KPHLNVGTIG…ALDTFVPNPK (202 aa)) enclose the tr-type G domain. A G1 region spans residues 19-26 (GHVDHGKT). Residue 19-26 (GHVDHGKT) coordinates GTP. A Mg(2+)-binding site is contributed by T26. A G2 region spans residues 62-66 (GITIA). Positions 83-86 (DCPG) are G3. GTP-binding positions include 83–87 (DCPGH) and 138–141 (NKAD). The G4 stretch occupies residues 138-141 (NKAD). Positions 179–181 (SAV) are G5.

Belongs to the TRAFAC class translation factor GTPase superfamily. Classic translation factor GTPase family. EF-Tu/EF-1A subfamily. Monomer.

It is found in the cytoplasm. The enzyme catalyses GTP + H2O = GDP + phosphate + H(+). Its function is as follows. GTP hydrolase that promotes the GTP-dependent binding of aminoacyl-tRNA to the A-site of ribosomes during protein biosynthesis. In Leptospira interrogans serogroup Icterohaemorrhagiae serovar copenhageni (strain Fiocruz L1-130), this protein is Elongation factor Tu.